The primary structure comprises 441 residues: Monodehydroascorbate reductase 3 (441 aa).

FAD-binding positions include G14–A17, E41, R48, K53, I96, and R147–E148. NAD(+) contacts are provided by residues G173–E179, E197, R203, and G262. Residue F175 to E179 participates in NADP(+) binding. 2 residues coordinate NADP(+): R203 and G262. D299 serves as a coordination point for FAD. NAD(+) is bound at residue E315–H316. An NADP(+)-binding site is contributed by E315–H316. R321 provides a ligand contact to L-ascorbate. Y350 provides a ligand contact to FAD. Y350 provides a ligand contact to NAD(+). Position 350 (Y350) interacts with NADP(+). L-ascorbate is bound at residue R352. Residue S418 is modified to Phosphoserine.

It belongs to the FAD-dependent oxidoreductase family. It depends on FAD as a cofactor.

Its subcellular location is the cytoplasm. It catalyses the reaction 2 monodehydro-L-ascorbate radical + NADH + H(+) = 2 L-ascorbate + NAD(+). Its function is as follows. Catalyzes the conversion of monodehydroascorbate to ascorbate, oxidizing NADH in the process. Required for producing sufficient ascorbate to maintain the interaction between Piriformospora indica and Arabidopsis in a mutualistic state. The protein is Monodehydroascorbate reductase 3 of Arabidopsis thaliana (Mouse-ear cress).